Reading from the N-terminus, the 607-residue chain is Chaperone protein DnaK (607 aa).

At Thr174 the chain carries Phosphothreonine; by autocatalysis. Residues Gly577–Tyr607 form a disordered region. Gly residues predominate over residues Pro583–Gly595.

This sequence belongs to the heat shock protein 70 family.

Functionally, acts as a chaperone. This is Chaperone protein DnaK from Caldicellulosiruptor bescii (strain ATCC BAA-1888 / DSM 6725 / KCTC 15123 / Z-1320) (Anaerocellum thermophilum).